The chain runs to 129 residues: Glycine cleavage system H protein (129 aa).

Residues 24 to 106 form the Lipoyl-binding domain; sequence LVRIGISAFA…HGEGWLLLVK (83 aa). Position 65 is an N6-lipoyllysine (Lys65).

Belongs to the GcvH family. In terms of assembly, the glycine cleavage system is composed of four proteins: P, T, L and H. (R)-lipoate serves as cofactor.

Functionally, the glycine cleavage system catalyzes the degradation of glycine. The H protein shuttles the methylamine group of glycine from the P protein to the T protein. This chain is Glycine cleavage system H protein, found in Prochlorococcus marinus (strain SARG / CCMP1375 / SS120).